A 362-amino-acid polypeptide reads, in one-letter code: 3-isopropylmalate dehydrogenase (362 aa).

Glycine 77 to glutamate 88 provides a ligand contact to NAD(+). Substrate-binding residues include arginine 95, arginine 105, arginine 134, and aspartate 223. Residues aspartate 223, aspartate 248, and aspartate 252 each contribute to the Mg(2+) site. Residue glycine 287–asparagine 298 participates in NAD(+) binding.

Belongs to the isocitrate and isopropylmalate dehydrogenases family. Homodimer. Requires Mg(2+) as cofactor. Mn(2+) is required as a cofactor.

The protein resides in the cytoplasm. It carries out the reaction (2R,3S)-3-isopropylmalate + NAD(+) = 4-methyl-2-oxopentanoate + CO2 + NADH. Its pathway is amino-acid biosynthesis; L-leucine biosynthesis; L-leucine from 3-methyl-2-oxobutanoate: step 3/4. In terms of biological role, catalyzes the oxidation of 3-carboxy-2-hydroxy-4-methylpentanoate (3-isopropylmalate) to 3-carboxy-4-methyl-2-oxopentanoate. The product decarboxylates to 4-methyl-2 oxopentanoate. The protein is 3-isopropylmalate dehydrogenase (LEU2) of Kluyveromyces lactis (strain ATCC 8585 / CBS 2359 / DSM 70799 / NBRC 1267 / NRRL Y-1140 / WM37) (Yeast).